Reading from the N-terminus, the 43-residue chain is Parvalbumin beta (43 aa).

EF-hand domains follow at residues 1-20 and 22-43; these read KVFEILDMDRSFIEEELKLF and LSSAETAAFLKIGVEEFQALVK. Positions 7, 9, 11, 12, 14, 16, and 37 each coordinate Ca(2+).

As to expression, detected in muscle and cutaneous mucus. In the skin, detected in cells in the basal region of the glandular epithelium of the dermal mucus glands (at protein level).

Its subcellular location is the cytoplasm. The protein localises to the secreted. Functionally, in muscle, parvalbumin is thought to be involved in relaxation after contraction. It binds two calcium ions. This is Parvalbumin beta from Rana temporaria (European common frog).